We begin with the raw amino-acid sequence, 205 residues long: ATP-dependent Clp protease proteolytic subunit (205 aa).

The active-site Nucleophile is the Ser108. His133 is a catalytic residue.

It belongs to the peptidase S14 family. As to quaternary structure, fourteen ClpP subunits assemble into 2 heptameric rings which stack back to back to give a disk-like structure with a central cavity, resembling the structure of eukaryotic proteasomes.

The protein resides in the cytoplasm. It carries out the reaction Hydrolysis of proteins to small peptides in the presence of ATP and magnesium. alpha-casein is the usual test substrate. In the absence of ATP, only oligopeptides shorter than five residues are hydrolyzed (such as succinyl-Leu-Tyr-|-NHMec, and Leu-Tyr-Leu-|-Tyr-Trp, in which cleavage of the -Tyr-|-Leu- and -Tyr-|-Trp bonds also occurs).. Its function is as follows. Cleaves peptides in various proteins in a process that requires ATP hydrolysis. Has a chymotrypsin-like activity. Plays a major role in the degradation of misfolded proteins. This Alcanivorax borkumensis (strain ATCC 700651 / DSM 11573 / NCIMB 13689 / SK2) protein is ATP-dependent Clp protease proteolytic subunit.